The chain runs to 352 residues: UDP-N-acetylglucosamine--N-acetylmuramyl-(pentapeptide) pyrophosphoryl-undecaprenol N-acetylglucosamine transferase (352 aa).

UDP-N-acetyl-alpha-D-glucosamine is bound by residues 13-15 (TGG), asparagine 125, arginine 161, serine 189, isoleucine 242, 261-266 (ALTVSE), and glutamine 286.

The protein belongs to the glycosyltransferase 28 family. MurG subfamily.

It localises to the cell inner membrane. The catalysed reaction is di-trans,octa-cis-undecaprenyl diphospho-N-acetyl-alpha-D-muramoyl-L-alanyl-D-glutamyl-meso-2,6-diaminopimeloyl-D-alanyl-D-alanine + UDP-N-acetyl-alpha-D-glucosamine = di-trans,octa-cis-undecaprenyl diphospho-[N-acetyl-alpha-D-glucosaminyl-(1-&gt;4)]-N-acetyl-alpha-D-muramoyl-L-alanyl-D-glutamyl-meso-2,6-diaminopimeloyl-D-alanyl-D-alanine + UDP + H(+). It participates in cell wall biogenesis; peptidoglycan biosynthesis. Cell wall formation. Catalyzes the transfer of a GlcNAc subunit on undecaprenyl-pyrophosphoryl-MurNAc-pentapeptide (lipid intermediate I) to form undecaprenyl-pyrophosphoryl-MurNAc-(pentapeptide)GlcNAc (lipid intermediate II). The chain is UDP-N-acetylglucosamine--N-acetylmuramyl-(pentapeptide) pyrophosphoryl-undecaprenol N-acetylglucosamine transferase from Erwinia tasmaniensis (strain DSM 17950 / CFBP 7177 / CIP 109463 / NCPPB 4357 / Et1/99).